We begin with the raw amino-acid sequence, 367 residues long: tRNA 2-selenouridine synthase (367 aa).

One can recognise a Rhodanese domain in the interval 14–137 (FLNDVPLMDV…LRRFLIDSLE (124 aa)). Cys97 acts as the S-selanylcysteine intermediate in catalysis.

It belongs to the SelU family. Monomer.

The catalysed reaction is 5-methylaminomethyl-2-thiouridine(34) in tRNA + selenophosphate + (2E)-geranyl diphosphate + H2O + H(+) = 5-methylaminomethyl-2-selenouridine(34) in tRNA + (2E)-thiogeraniol + phosphate + diphosphate. It catalyses the reaction 5-methylaminomethyl-2-thiouridine(34) in tRNA + (2E)-geranyl diphosphate = 5-methylaminomethyl-S-(2E)-geranyl-thiouridine(34) in tRNA + diphosphate. It carries out the reaction 5-methylaminomethyl-S-(2E)-geranyl-thiouridine(34) in tRNA + selenophosphate + H(+) = 5-methylaminomethyl-2-(Se-phospho)selenouridine(34) in tRNA + (2E)-thiogeraniol. The enzyme catalyses 5-methylaminomethyl-2-(Se-phospho)selenouridine(34) in tRNA + H2O = 5-methylaminomethyl-2-selenouridine(34) in tRNA + phosphate. In terms of biological role, involved in the post-transcriptional modification of the uridine at the wobble position (U34) of tRNA(Lys), tRNA(Glu) and tRNA(Gln). Catalyzes the conversion of 2-thiouridine (S2U-RNA) to 2-selenouridine (Se2U-RNA). Acts in a two-step process involving geranylation of 2-thiouridine (S2U) to S-geranyl-2-thiouridine (geS2U) and subsequent selenation of the latter derivative to 2-selenouridine (Se2U) in the tRNA chain. The sequence is that of tRNA 2-selenouridine synthase from Marinobacter nauticus (strain ATCC 700491 / DSM 11845 / VT8) (Marinobacter aquaeolei).